We begin with the raw amino-acid sequence, 194 residues long: Histone H1 (194 aa).

An N-acetylalanine; partial modification is found at A1. Positions 1-14 (AEVAPAPAAAAPAK) are enriched in low complexity. Disordered regions lie at residues 1–31 (AEVAPAPAAAAPAKAPKKKAAAKPKKSGPAV) and 105–194 (AKKP…AAKK). The segment covering 15–26 (APKKKAAAKPKK) has biased composition (basic residues). The 74-residue stretch at 27-100 (SGPAVGELAG…GASGSFKLNK (74 aa)) folds into the H15 domain. Over residues 116 to 194 (KAKKVAAKKP…KVKKPAAAKK (79 aa)) the composition is skewed to basic residues. Phosphoserine is present on residues S145, S161, and S182.

Belongs to the histone H1/H5 family.

Its subcellular location is the nucleus. It is found in the chromosome. Histones H1 are necessary for the condensation of nucleosome chains into higher-order structures. This chain is Histone H1, found in Salmo trutta (Brown trout).